Here is a 145-residue protein sequence, read N- to C-terminus: uncharacterized protein (145 aa).

The first 20 residues, 1 to 20, serve as a signal peptide directing secretion; the sequence is MKTCTVICCTALVLGLTAYA.

This is an uncharacterized protein from Aedes vexans (Inland floodwater mosquito).